The following is a 363-amino-acid chain: Homeobox protein Hox-A2a (363 aa).

4 disordered regions span residues 30-88 (DSFQ…LPPE), 98-117 (SKRNHLPNSTTTTISNGPVC), 189-220 (RMKHKRQTQSKENHNAEGKGPSTEEGIHSDEE), and 268-308 (DKNL…LDVS). The segment covering 31 to 44 (SFQSSSIKSSTLSR) has biased composition (polar residues). Positions 88–93 (EYPWMR) match the Antp-type hexapeptide motif. The span at 103–113 (LPNSTTTTISN) shows a compositional bias: polar residues. A DNA-binding region (homeobox) is located at residues 137–196 (SRRLRTAYTNTQLLELEKEFHFNKYLCRPRRVEIAALLDLTERQVKVWFQNRRMKHKRQT).

Belongs to the Antp homeobox family. Proboscipedia subfamily.

The protein localises to the nucleus. Sequence-specific transcription factor which is part of a developmental regulatory system that provides cells with specific positional identities on the anterior-posterior axis. This Takifugu rubripes (Japanese pufferfish) protein is Homeobox protein Hox-A2a (hoxa2a).